The chain runs to 208 residues: MFTGIVNGIARVVSINKKKNFHTYTVNFSSILLKNLKIGDSVAHNGCCLTVKYINCPHVVFDIMKITIANTNLGVLNIGDYVNIERSLKYGDEMGGHIISGHIMNTGEISKISKLDKNYILWCKVKDLSLMKYIFYKGFIAIDGISLTINNIIKNEFCVSIIPETLSSTTIGFKKIGQLVNIEIDFYTQIIVDTTKRLIKKDISTLFK.

Lumazine-binding repeat units lie at residues 1–97 (MFTG…MGGH) and 98–195 (IISG…VDTT). 2,4-dihydroxypteridine is bound by residues 4-6 (GIV), 48-50 (CLT), 62-67 (DIMKIT), 101-103 (GHI), K137, 146-148 (SLT), and 160-165 (SIIPET).

In terms of assembly, homotrimer.

The catalysed reaction is 2 6,7-dimethyl-8-(1-D-ribityl)lumazine + H(+) = 5-amino-6-(D-ribitylamino)uracil + riboflavin. It participates in cofactor biosynthesis; riboflavin biosynthesis; riboflavin from 2-hydroxy-3-oxobutyl phosphate and 5-amino-6-(D-ribitylamino)uracil: step 2/2. Its function is as follows. Catalyzes the dismutation of two molecules of 6,7-dimethyl-8-ribityllumazine, resulting in the formation of riboflavin and 5-amino-6-(D-ribitylamino)uracil. In Buchnera aphidicola subsp. Schizaphis graminum (strain Sg), this protein is Riboflavin synthase (ribE).